The primary structure comprises 222 residues: Glutathione S-transferase alpha M14 (222 aa).

Position 1 is an N-acetylmethionine (Met1). The residue at position 2 (Ala2) is an N-acetylalanine; in Glutathione S-transferase alpha M14, N-terminally processed. In terms of domain architecture, GST N-terminal spans 3 to 83 (GKPILHYFNG…YIATKYNLYG (81 aa)). Lys4 carries the post-translational modification N6-succinyllysine. Glutathione contacts are provided by residues Tyr9, 54-55 (QV), and 67-68 (QT). The 124-residue stretch at 85-208 (DAKERALIDM…QPGSQRKPPM (124 aa)) folds into the GST C-terminal domain. Residues 199–222 (QPGSQRKPPMDAKKIRRSQEYFPD) form a disordered region. A compositionally biased stretch (basic and acidic residues) spans 206–222 (PPMDAKKIRRSQEYFPD).

This sequence belongs to the GST superfamily. Alpha family. As to quaternary structure, homodimer or heterodimer of GSTA1 and GSTA2.

The protein resides in the cytoplasm. The catalysed reaction is RX + glutathione = an S-substituted glutathione + a halide anion + H(+). It catalyses the reaction prostaglandin A2 + glutathione = prostaglandin A2-S-(R)-glutathione. It carries out the reaction prostaglandin J2 + glutathione = prostaglandin J2-S-(R)-glutathione. The enzyme catalyses (13S)-hydroperoxy-(9Z,11E)-octadecadienoate + 2 glutathione = (13S)-hydroxy-(9Z,11E)-octadecadienoate + glutathione disulfide + H2O. The catalysed reaction is androst-5-ene-3,17-dione = androst-4-ene-3,17-dione. In terms of biological role, glutathione S-transferase that catalyzes the nucleophilic attack of the sulfur atom of glutathione on the electrophilic groups of a wide range of exogenous and endogenous compounds. Involved in the formation of glutathione conjugates of both prostaglandin A2 (PGA2) and prostaglandin J2 (PGJ2). It also catalyzes the isomerization of D5-androstene-3,17-dione (AD) into D4-androstene-3,17-dione and may therefore play an important role in hormone biosynthesis. Through its glutathione-dependent peroxidase activity toward the fatty acid hydroperoxide (13S)-hydroperoxy-(9Z,11E)-octadecadienoate/13-HPODE it is also involved in the metabolism of oxidized linoleic acid. The chain is Glutathione S-transferase alpha M14 from Sus scrofa (Pig).